We begin with the raw amino-acid sequence, 84 residues long: Serine protease inhibitor Kazal-type 2 (84 aa).

The first 23 residues, 1-23, serve as a signal peptide directing secretion; it reads MALSVLRLALLLLAVTFAASLIP. Gln-24 bears the Pyrrolidone carboxylic acid mark. One can recognise a Kazal-like domain in the interval 30 to 84; sequence KYRTPNCSQYRLPGCPRHFNPVCGSDMSTYANECTLCMKIREGGHNIKIIRNGPC. 3 cysteine pairs are disulfide-bonded: Cys-36–Cys-66, Cys-44–Cys-63, and Cys-52–Cys-84.

Expressed in epididymis (at protein level).

The protein localises to the secreted. The protein resides in the cytoplasmic vesicle. It localises to the secretory vesicle. Its subcellular location is the acrosome. Its function is as follows. As a strong inhibitor of acrosin, it is required for normal spermiogenesis. It probably hinders premature activation of proacrosin and other proteases, thus preventing the cascade of events leading to spermiogenesis defects. May be involved in the regulation of serine protease-dependent germ cell apoptosis. It also inhibits trypsin. The protein is Serine protease inhibitor Kazal-type 2 (SPINK2) of Homo sapiens (Human).